The following is a 141-amino-acid chain: Hemoglobin subunit alpha (141 aa).

The 141-residue stretch at 1 to 141 folds into the Globin domain; the sequence is VLSAADKAHV…VSTVLTSKYR (141 aa). Ser3 carries the phosphoserine modification. An N6-succinyllysine mark is found at Lys7 and Lys11. Lys16 carries the post-translational modification N6-acetyllysine; alternate. Position 16 is an N6-succinyllysine; alternate (Lys16). Tyr24 carries the post-translational modification Phosphotyrosine. Ser35 is subject to Phosphoserine. Lys40 bears the N6-succinyllysine mark. Position 49 is a phosphoserine (Ser49). His58 serves as a coordination point for O2. His87 contributes to the heme b binding site. A Phosphothreonine modification is found at Thr108. Position 124 is a phosphoserine (Ser124). Residues Thr134 and Thr137 each carry the phosphothreonine modification. Ser138 is subject to Phosphoserine.

The protein belongs to the globin family. In terms of assembly, heterotetramer of two alpha chains and two beta chains. Red blood cells.

In terms of biological role, involved in oxygen transport from the lung to the various peripheral tissues. Functionally, hemopressin acts as an antagonist peptide of the cannabinoid receptor CNR1. Hemopressin-binding efficiently blocks cannabinoid receptor CNR1 and subsequent signaling. In Bradypus tridactylus (Pale-throated three-toed sloth), this protein is Hemoglobin subunit alpha (HBA).